A 315-amino-acid polypeptide reads, in one-letter code: Lipoyl synthase (315 aa).

[4Fe-4S] cluster-binding residues include C62, C67, C73, C88, C92, C95, and S302. Positions 73 to 291 constitute a Radical SAM core domain; it reads CFGHGTATFM…GELAKKLGFS (219 aa).

The protein belongs to the radical SAM superfamily. Lipoyl synthase family. [4Fe-4S] cluster serves as cofactor.

Its subcellular location is the cytoplasm. The enzyme catalyses [[Fe-S] cluster scaffold protein carrying a second [4Fe-4S](2+) cluster] + N(6)-octanoyl-L-lysyl-[protein] + 2 oxidized [2Fe-2S]-[ferredoxin] + 2 S-adenosyl-L-methionine + 4 H(+) = [[Fe-S] cluster scaffold protein] + N(6)-[(R)-dihydrolipoyl]-L-lysyl-[protein] + 4 Fe(3+) + 2 hydrogen sulfide + 2 5'-deoxyadenosine + 2 L-methionine + 2 reduced [2Fe-2S]-[ferredoxin]. Its pathway is protein modification; protein lipoylation via endogenous pathway; protein N(6)-(lipoyl)lysine from octanoyl-[acyl-carrier-protein]: step 2/2. Its function is as follows. Catalyzes the radical-mediated insertion of two sulfur atoms into the C-6 and C-8 positions of the octanoyl moiety bound to the lipoyl domains of lipoate-dependent enzymes, thereby converting the octanoylated domains into lipoylated derivatives. This is Lipoyl synthase from Coxiella burnetii (strain Dugway 5J108-111).